The sequence spans 299 residues: GTPase Era (299 aa).

Residues 4-171 enclose the Era-type G domain; the sequence is KSGFVAILGR…VDILSENLDE (168 aa). Residues 12–19 form a G1 region; the sequence is GRPNVGKS. 12-19 contributes to the GTP binding site; sequence GRPNVGKS. Positions 38–42 are G2; that stretch reads QTTRN. The interval 59-62 is G3; the sequence is DTPG. GTP is bound by residues 59–63 and 121–124; these read DTPGI and NKID. A G4 region spans residues 121 to 124; sequence NKID. Positions 150–152 are G5; it reads ISA. In terms of domain architecture, KH type-2 spans 202-280; it reads TREEIPHSVA…FLETWVKVKK (79 aa).

Belongs to the TRAFAC class TrmE-Era-EngA-EngB-Septin-like GTPase superfamily. Era GTPase family. In terms of assembly, monomer.

It is found in the cytoplasm. It localises to the cell membrane. Its function is as follows. An essential GTPase that binds both GDP and GTP, with rapid nucleotide exchange. Plays a role in 16S rRNA processing and 30S ribosomal subunit biogenesis and possibly also in cell cycle regulation and energy metabolism. This is GTPase Era from Streptococcus pneumoniae (strain Hungary19A-6).